The sequence spans 407 residues: Na(+)-translocating NADH-quinone reductase subunit F (407 aa).

The chain crosses the membrane as a helical span at residues 3–23; sequence IILGVAMFTGIVMVLVLLILF. One can recognise a 2Fe-2S ferredoxin-type domain in the interval 32–126; sequence GDIAVEVNGD…NLKIELPEEI (95 aa). Residues cysteine 69, cysteine 75, cysteine 78, and cysteine 110 each contribute to the [2Fe-2S] cluster site. One can recognise an FAD-binding FR-type domain in the interval 129–269; sequence VKKWECEVIS…SGPFGEFFAK (141 aa).

This sequence belongs to the NqrF family. Composed of six subunits; NqrA, NqrB, NqrC, NqrD, NqrE and NqrF. Requires [2Fe-2S] cluster as cofactor. FAD serves as cofactor.

Its subcellular location is the cell inner membrane. It carries out the reaction a ubiquinone + n Na(+)(in) + NADH + H(+) = a ubiquinol + n Na(+)(out) + NAD(+). NQR complex catalyzes the reduction of ubiquinone-1 to ubiquinol by two successive reactions, coupled with the transport of Na(+) ions from the cytoplasm to the periplasm. The first step is catalyzed by NqrF, which accepts electrons from NADH and reduces ubiquinone-1 to ubisemiquinone by a one-electron transfer pathway. The sequence is that of Na(+)-translocating NADH-quinone reductase subunit F from Serratia proteamaculans (strain 568).